The chain runs to 367 residues: Anhydro-N-acetylmuramic acid kinase (367 aa).

11–18 lines the ATP pocket; it reads GTSLDGVD.

Belongs to the anhydro-N-acetylmuramic acid kinase family.

It catalyses the reaction 1,6-anhydro-N-acetyl-beta-muramate + ATP + H2O = N-acetyl-D-muramate 6-phosphate + ADP + H(+). It participates in amino-sugar metabolism; 1,6-anhydro-N-acetylmuramate degradation. It functions in the pathway cell wall biogenesis; peptidoglycan recycling. Catalyzes the specific phosphorylation of 1,6-anhydro-N-acetylmuramic acid (anhMurNAc) with the simultaneous cleavage of the 1,6-anhydro ring, generating MurNAc-6-P. Is required for the utilization of anhMurNAc either imported from the medium or derived from its own cell wall murein, and thus plays a role in cell wall recycling. The sequence is that of Anhydro-N-acetylmuramic acid kinase from Bradyrhizobium diazoefficiens (strain JCM 10833 / BCRC 13528 / IAM 13628 / NBRC 14792 / USDA 110).